Reading from the N-terminus, the 305-residue chain is Tetraspanin-12 (305 aa).

Residues M1–C12 are Cytoplasmic-facing. S-palmitoyl cysteine attachment occurs at residues C9 and C12. The chain crosses the membrane as a helical span at residues L13–A33. Topologically, residues W34–Y59 are extracellular. Residues F60 to L80 form a helical membrane-spanning segment. Over G81–N89 the chain is Cytoplasmic. C83 carries the S-palmitoyl cysteine lipid modification. A helical membrane pass occupies residues L90–C110. The Extracellular portion of the chain corresponds to G111–R224. The helical transmembrane segment at F225–L245 threads the bilayer. Topologically, residues W246–L305 are cytoplasmic.

It belongs to the tetraspanin (TM4SF) family. In terms of assembly, component of a complex, at least composed of TSPAN12, FZD4 and norrin (NDP). Post-translationally, palmitoylated; required for interaction with ADAM10. The precise position of palmitoylated residues is unclear and occurs either on Cys-9, Cys-12 and/or Cys-83.

The protein localises to the cell membrane. Its function is as follows. Regulator of cell surface receptor signal transduction. Plays a central role in retinal vascularization by regulating norrin (NDP) signal transduction. Acts in concert with norrin (NDP) to promote FZD4 multimerization and subsequent activation of FZD4, leading to promote accumulation of beta-catenin (CTNNB1) and stimulate LEF/TCF-mediated transcriptional programs. Suprisingly, it only activates the norrin (NDP)-dependent activation of FZD4, while it does not activate the Wnt-dependent activation of FZD4, suggesting the existence of a Wnt-independent signaling that also promote accumulation the beta-catenin (CTNNB1). This chain is Tetraspanin-12 (TSPAN12), found in Gallus gallus (Chicken).